We begin with the raw amino-acid sequence, 308 residues long: Eugenol synthase 1 (308 aa).

NADP(+) contacts are provided by residues 13 to 16, 35 to 45, R36, 86 to 88, 111 to 113, K133, and 153 to 155; these read TGYI, VRESTVSDPAK, QMQ, SEF, and NCF. Catalysis depends on K133, which acts as the Proton donor/acceptor.

It belongs to the NmrA-type oxidoreductase family. In flowers, mostly expressed in limbs, and, to a lower extent, in tubes.

It catalyses the reaction eugenol + a carboxylate + NADP(+) = a coniferyl ester + NADPH. It carries out the reaction eugenol + acetate + NADP(+) = (E)-coniferyl acetate + NADPH. Its pathway is aromatic compound metabolism; phenylpropanoid biosynthesis. In terms of biological role, involved in the biosynthesis of the floral volatile eugenol. Catalyzes the synthesis of the phenylpropene eugenol from coniferyl acetate. Phenylpropenes are produced by plants as defense compounds with antimicrobial and antianimal properties, or as floral attractants of pollinators. In Petunia hybrida (Petunia), this protein is Eugenol synthase 1.